Here is a 240-residue protein sequence, read N- to C-terminus: Dihydromonapterin reductase (240 aa).

The active-site Proton acceptor is Y152.

Belongs to the short-chain dehydrogenases/reductases (SDR) family. FolM subfamily.

It catalyses the reaction (6S)-5,6,7,8-tetrahydrofolate + NADP(+) = 7,8-dihydrofolate + NADPH + H(+). It carries out the reaction 7,8-dihydromonapterin + NADPH + H(+) = 5,6,7,8-tetrahydromonapterin + NADP(+). Catalyzes the reduction of dihydromonapterin to tetrahydromonapterin. Also has lower activity with dihydrofolate. The sequence is that of Dihydromonapterin reductase (folM) from Escherichia coli O6:H1 (strain CFT073 / ATCC 700928 / UPEC).